The sequence spans 81 residues: Large ribosomal subunit protein bL31 (81 aa).

Zn(2+) contacts are provided by C16, C18, C36, and C39.

This sequence belongs to the bacterial ribosomal protein bL31 family. Type A subfamily. In terms of assembly, part of the 50S ribosomal subunit. The cofactor is Zn(2+).

Its function is as follows. Binds the 23S rRNA. In Rhodopirellula baltica (strain DSM 10527 / NCIMB 13988 / SH1), this protein is Large ribosomal subunit protein bL31.